Here is a 1939-residue protein sequence, read N- to C-terminus: Myosin-6 (1939 aa).

The Myosin N-terminal SH3-like domain occupies aspartate 32–proline 81. In terms of domain architecture, Myosin motor spans aspartate 85–aspartate 780. Lysine 129 is modified (N6,N6,N6-trimethyllysine). Glycine 178–threonine 185 provides a ligand contact to ATP. Threonine 379 carries the post-translational modification Phosphothreonine. A Phosphoserine modification is found at serine 417. Actin-binding regions lie at residues leucine 657–glutamate 679 and lysine 759–glycine 773. The IQ domain occupies leucine 783–alanine 812. Positions leucine 842–glutamate 1939 form a coiled coil. Serine 1139 is subject to Phosphoserine. At tyrosine 1261 the chain carries Phosphotyrosine. Serine 1271 is modified (phosphoserine). Threonine 1277 and threonine 1284 each carry phosphothreonine. The residue at position 1309 (serine 1309) is a Phosphoserine. Phosphotyrosine is present on tyrosine 1310. Residue threonine 1311 is modified to Phosphothreonine. At serine 1512 the chain carries Phosphoserine. Threonine 1515 is modified (phosphothreonine). 2 stretches are compositionally biased toward basic and acidic residues: residues glycine 1826–glutamate 1837 and lysine 1925–glutamate 1939. Disordered stretches follow at residues glycine 1826 to isoleucine 1849 and glutamate 1909 to glutamate 1939.

The protein belongs to the TRAFAC class myosin-kinesin ATPase superfamily. Myosin family. As to quaternary structure, muscle myosin is a hexameric protein that consists of 2 heavy chain subunits (MHC), 2 alkali light chain subunits (MLC) and 2 regulatory light chain subunits (MLC-2).

It localises to the cytoplasm. The protein localises to the myofibril. In terms of biological role, muscle contraction. The polypeptide is Myosin-6 (MYH6) (Homo sapiens (Human)).